Consider the following 443-residue polypeptide: Amino-acid acetyltransferase (443 aa).

An N-acetyltransferase domain is found at 296 to 435 (EQIRRATIND…KEMYNYQRRS (140 aa)).

The protein belongs to the acetyltransferase family. ArgA subfamily. Homohexamer.

The protein localises to the cytoplasm. It carries out the reaction L-glutamate + acetyl-CoA = N-acetyl-L-glutamate + CoA + H(+). It participates in amino-acid biosynthesis; L-arginine biosynthesis; N(2)-acetyl-L-ornithine from L-glutamate: step 1/4. The sequence is that of Amino-acid acetyltransferase from Enterobacter sp. (strain 638).